A 406-amino-acid polypeptide reads, in one-letter code: Riboflavin biosynthesis protein RibBA (406 aa).

Positions 1–209 (MSEREEFKFN…IADLIKYRLR (209 aa)) are DHBP synthase. D-ribulose 5-phosphate contacts are provided by residues 33–34 (RE), Asp38, 148–152 (RAGHT), and Glu172. Residue Glu34 participates in Mg(2+) binding. A Mg(2+)-binding site is contributed by His151. The GTP cyclohydrolase II stretch occupies residues 210–406 (RETLVEKVAS…VKKDKLGHMF (197 aa)). Residue 260–264 (RVHSE) participates in GTP binding. Cys265, Cys276, and Cys278 together coordinate Zn(2+). GTP contacts are provided by residues Gln281, 304–306 (EGR), and Thr326. Catalysis depends on Asp338, which acts as the Proton acceptor; for GTP cyclohydrolase activity. Arg340 functions as the Nucleophile; for GTP cyclohydrolase activity in the catalytic mechanism. Positions 361 and 366 each coordinate GTP.

It in the N-terminal section; belongs to the DHBP synthase family. The protein in the C-terminal section; belongs to the GTP cyclohydrolase II family. Requires Mg(2+) as cofactor. It depends on Mn(2+) as a cofactor. The cofactor is Zn(2+).

The catalysed reaction is D-ribulose 5-phosphate = (2S)-2-hydroxy-3-oxobutyl phosphate + formate + H(+). The enzyme catalyses GTP + 4 H2O = 2,5-diamino-6-hydroxy-4-(5-phosphoribosylamino)-pyrimidine + formate + 2 phosphate + 3 H(+). Its pathway is cofactor biosynthesis; riboflavin biosynthesis; 2-hydroxy-3-oxobutyl phosphate from D-ribulose 5-phosphate: step 1/1. It functions in the pathway cofactor biosynthesis; riboflavin biosynthesis; 5-amino-6-(D-ribitylamino)uracil from GTP: step 1/4. In terms of biological role, catalyzes the conversion of D-ribulose 5-phosphate to formate and 3,4-dihydroxy-2-butanone 4-phosphate. Catalyzes the conversion of GTP to 2,5-diamino-6-ribosylamino-4(3H)-pyrimidinone 5'-phosphate (DARP), formate and pyrophosphate. In Aquifex aeolicus (strain VF5), this protein is Riboflavin biosynthesis protein RibBA.